Consider the following 266-residue polypeptide: Diphthine synthase (266 aa).

S-adenosyl-L-methionine-binding positions include Leu9, Asp84, Val87, 112-113, Leu169, Ala210, and His235; that span reads SI.

This sequence belongs to the diphthine synthase family. As to quaternary structure, homodimer.

It catalyses the reaction 2-[(3S)-amino-3-carboxypropyl]-L-histidyl-[translation elongation factor 2] + 3 S-adenosyl-L-methionine = diphthine-[translation elongation factor 2] + 3 S-adenosyl-L-homocysteine + 3 H(+). It participates in protein modification; peptidyl-diphthamide biosynthesis. S-adenosyl-L-methionine-dependent methyltransferase that catalyzes the trimethylation of the amino group of the modified target histidine residue in translation elongation factor 2 (EF-2), to form an intermediate called diphthine. The three successive methylation reactions represent the second step of diphthamide biosynthesis. This chain is Diphthine synthase, found in Methanosarcina mazei (strain ATCC BAA-159 / DSM 3647 / Goe1 / Go1 / JCM 11833 / OCM 88) (Methanosarcina frisia).